The chain runs to 564 residues: Adenine deaminase (564 aa).

The protein belongs to the metallo-dependent hydrolases superfamily. Adenine deaminase family. Mn(2+) is required as a cofactor.

The catalysed reaction is adenine + H2O + H(+) = hypoxanthine + NH4(+). The chain is Adenine deaminase from Methylobacterium sp. (strain 4-46).